Here is a 293-residue protein sequence, read N- to C-terminus: NAD kinase (293 aa).

Aspartate 68 serves as the catalytic Proton acceptor. NAD(+) contacts are provided by residues 68–69, 142–143, arginine 153, aspartate 172, and 183–188; these read DG, ND, and TAYSLS.

It belongs to the NAD kinase family. A divalent metal cation is required as a cofactor.

The protein resides in the cytoplasm. It catalyses the reaction NAD(+) + ATP = ADP + NADP(+) + H(+). Functionally, involved in the regulation of the intracellular balance of NAD and NADP, and is a key enzyme in the biosynthesis of NADP. Catalyzes specifically the phosphorylation on 2'-hydroxyl of the adenosine moiety of NAD to yield NADP. The polypeptide is NAD kinase (Lachnospira eligens (strain ATCC 27750 / DSM 3376 / VPI C15-48 / C15-B4) (Eubacterium eligens)).